The following is a 461-amino-acid chain: Cysteine--tRNA ligase (461 aa).

Cysteine 28 provides a ligand contact to Zn(2+). Positions 30–40 (ITVYDLCHIGH) match the 'HIGH' region motif. Zn(2+) is bound by residues cysteine 209, histidine 234, and glutamate 238. The 'KMSKS' region signature appears at 266 to 270 (KMSKS). Residue lysine 269 participates in ATP binding.

This sequence belongs to the class-I aminoacyl-tRNA synthetase family. Monomer. Requires Zn(2+) as cofactor.

It is found in the cytoplasm. The enzyme catalyses tRNA(Cys) + L-cysteine + ATP = L-cysteinyl-tRNA(Cys) + AMP + diphosphate. In Escherichia coli (strain K12 / MC4100 / BW2952), this protein is Cysteine--tRNA ligase.